A 421-amino-acid chain; its full sequence is UDP-N-acetylglucosamine 1-carboxyvinyltransferase (421 aa).

22 to 23 is a binding site for phosphoenolpyruvate; the sequence is KN. Arg93 is a binding site for UDP-N-acetyl-alpha-D-glucosamine. The active-site Proton donor is the Cys117. Cys117 is modified (2-(S-cysteinyl)pyruvic acid O-phosphothioketal). UDP-N-acetyl-alpha-D-glucosamine contacts are provided by residues 122 to 126, Asp308, and Leu330; that span reads RPVDL.

The protein belongs to the EPSP synthase family. MurA subfamily.

The protein localises to the cytoplasm. It carries out the reaction phosphoenolpyruvate + UDP-N-acetyl-alpha-D-glucosamine = UDP-N-acetyl-3-O-(1-carboxyvinyl)-alpha-D-glucosamine + phosphate. It functions in the pathway cell wall biogenesis; peptidoglycan biosynthesis. Cell wall formation. Adds enolpyruvyl to UDP-N-acetylglucosamine. The chain is UDP-N-acetylglucosamine 1-carboxyvinyltransferase from Wolinella succinogenes (strain ATCC 29543 / DSM 1740 / CCUG 13145 / JCM 31913 / LMG 7466 / NCTC 11488 / FDC 602W) (Vibrio succinogenes).